A 574-amino-acid polypeptide reads, in one-letter code: MSLLDLVLLLLVLGLGGVLLLRRKGEDRSAQEARELLEAARREAREVLEAARKEARDILEAARQEAKALRQEAEARAKAQREEVEAELRRRLEAAEAEAKKRLEEAGERLKAEREELRAERERLRSLQEELKEERERLKAEREELRREGERLAKRAEALDARAARLEEAEAELVRKEEALKAEARALEERLKEVERRLYEVAGLTPEEARRLVLERLDRELEEEKAQRVRAALERARLEARREAQKILAQAMQRQASETAAQLAVTVVPIPSDAMKGRIIGREGRNIRAFEALTGVDLIIDDTPDAVLLSSFNPIRREIARMALEELLKDGRIHPSRIEEVVEKAKQEMKTFIYERGEEAALEAGVVGLKPGLIQLLGRLHFRSSYGQNVLKHSIQVAHLAGIMAAELGLDAALARRAGLLHDIGKSVDREVEGSHVEIGIALARRFGEPKEVVDAIAHHHDPDNAETLYAVLVAAADALSAARPGARRESLEEYLQRLEALERIALSFPGVETAFAVQAGREVRVIVKPEKISDAKATLLAREIASRIEKEMNYPGQVQVTVVRETRAVEYAR.

A helical transmembrane segment spans residues 1 to 21 (MSLLDLVLLLLVLGLGGVLLL). The 64-residue stretch at 264 to 327 (AVTVVPIPSD…EIARMALEEL (64 aa)) folds into the KH domain. An HD domain is found at 390–483 (VLKHSIQVAH…VAAADALSAA (94 aa)).

The protein belongs to the RNase Y family.

The protein resides in the cell membrane. Its function is as follows. Endoribonuclease that initiates mRNA decay. The protein is Ribonuclease Y of Thermus thermophilus (strain ATCC 27634 / DSM 579 / HB8).